The following is a 543-amino-acid chain: MTRFVFITGGVVSSLGKGIASAALAALLQARGYKVRMRKLDPYLNVDPGTMSPYQHGEVFITDDGAETDLDLGHYERFTGVHASRADNTTTGRIYSDVIARERRGDYLGGTVQVIPHITDAIKDVVVTGTDDYDFVLVEIGGTVGDIESLPFLEAIRQLRNDLGHAQTMCVHLTLLPYIPAAGELKTKPTQHSVKELQNVGIQPQMLLCRSDRPIPDNERRKIANFCNVRPEAVIAALDVDTIYACPISYHNEGMDQEVLRYFDLPYDSKPDLSRWEKIVHAIREPEGEVRVAIVGKYTALLDSYKSLAEALLHGGIANHVKVKLDWIESEEFEKNGNIAERLKDADAILVPGGFGERGAEGKIQAVRYAREHNIPFLGICFGMQMAVIECARSLAGLPKASSTEFGPTDEPLVGLMTEWARGSEMLRRREGGDLGGTMRLGAYPAKLVPGSRVAEIYGRTEIRERHRHRWEVNAHYKDRLEKTGLRFSGLSPDGVLPEVVEYPDHAWFVAVQYHPELLSKPFDPHPLFAGFIAAAVKEAHRK.

Positions 1-265 (MTRFVFITGG…DQEVLRYFDL (265 aa)) are amidoligase domain. Ser-13 is a CTP binding site. Ser-13 serves as a coordination point for UTP. 14 to 19 (SLGKGI) provides a ligand contact to ATP. Residue Tyr-54 coordinates L-glutamine. Asp-71 is a binding site for ATP. Mg(2+)-binding residues include Asp-71 and Glu-139. CTP contacts are provided by residues 146–148 (DIE), 186–191 (KTKPTQ), and Lys-222. UTP is bound by residues 186–191 (KTKPTQ) and Lys-222. In terms of domain architecture, Glutamine amidotransferase type-1 spans 291–542 (RVAIVGKYTA…IAAAVKEAHR (252 aa)). Gly-354 contributes to the L-glutamine binding site. Catalysis depends on Cys-381, which acts as the Nucleophile; for glutamine hydrolysis. L-glutamine-binding positions include 382-385 (FGMQ), Glu-405, and Arg-470. Active-site residues include His-515 and Glu-517.

This sequence belongs to the CTP synthase family. As to quaternary structure, homotetramer.

It catalyses the reaction UTP + L-glutamine + ATP + H2O = CTP + L-glutamate + ADP + phosphate + 2 H(+). The enzyme catalyses L-glutamine + H2O = L-glutamate + NH4(+). It carries out the reaction UTP + NH4(+) + ATP = CTP + ADP + phosphate + 2 H(+). The protein operates within pyrimidine metabolism; CTP biosynthesis via de novo pathway; CTP from UDP: step 2/2. Its activity is regulated as follows. Allosterically activated by GTP, when glutamine is the substrate; GTP has no effect on the reaction when ammonia is the substrate. The allosteric effector GTP functions by stabilizing the protein conformation that binds the tetrahedral intermediate(s) formed during glutamine hydrolysis. Inhibited by the product CTP, via allosteric rather than competitive inhibition. In terms of biological role, catalyzes the ATP-dependent amination of UTP to CTP with either L-glutamine or ammonia as the source of nitrogen. Regulates intracellular CTP levels through interactions with the four ribonucleotide triphosphates. The protein is CTP synthase of Gluconobacter oxydans (strain 621H) (Gluconobacter suboxydans).